A 107-amino-acid polypeptide reads, in one-letter code: UPF0145 protein CKO_02237 (107 aa).

This sequence belongs to the UPF0145 family.

This is UPF0145 protein CKO_02237 from Citrobacter koseri (strain ATCC BAA-895 / CDC 4225-83 / SGSC4696).